A 480-amino-acid polypeptide reads, in one-letter code: Endothelial transcription factor GATA-2 (480 aa).

Phosphoserine is present on Ser73. Arg86 carries the asymmetric dimethylarginine modification. A disordered region spans residues 166–208 (SGSHLFGFPPTPPKEVSPDPSTTGAASPASPSAGGSVARGEDK). The span at 183-201 (PDPSTTGAASPASPSAGGS) shows a compositional bias: low complexity. Ser192 carries the phosphoserine modification. 2 GATA-type zinc fingers span residues 295–319 (CVNC…CNAC) and 349–373 (CANC…CNAC). Residue Lys389 forms a Glycyl lysine isopeptide (Lys-Gly) (interchain with G-Cter in SUMO2) linkage. The segment at 457–480 (TPIHPSSSLSFGHPHPSSMVTAMG) is disordered.

Interacts with BRD3. Interacts with AR and CCAR1. Interacts with MDFIC.

The protein resides in the nucleus. Transcriptional activator which regulates endothelin-1 gene expression in endothelial cells. Binds to the consensus sequence 5'-AGATAG-3'. Plays an important role in the regulation of phagocytosis in alveolar macrophages, particularly during P.carinii infection. The sequence is that of Endothelial transcription factor GATA-2 from Rattus norvegicus (Rat).